The primary structure comprises 201 residues: Adenylyl-sulfate kinase (201 aa).

The interval 1-23 (MALHDENVVWHSHPVTPQQREQH) is disordered. Position 35–42 (35–42 (GLSGSGKS)) interacts with ATP. The active-site Phosphoserine intermediate is Ser-109.

The protein belongs to the APS kinase family.

The catalysed reaction is adenosine 5'-phosphosulfate + ATP = 3'-phosphoadenylyl sulfate + ADP + H(+). It functions in the pathway sulfur metabolism; hydrogen sulfide biosynthesis; sulfite from sulfate: step 2/3. Its function is as follows. Catalyzes the synthesis of activated sulfate. This Escherichia coli O127:H6 (strain E2348/69 / EPEC) protein is Adenylyl-sulfate kinase.